The chain runs to 514 residues: Lysine--tRNA ligase (514 aa).

Residues glutamate 424 and glutamate 431 each coordinate Mg(2+).

The protein belongs to the class-II aminoacyl-tRNA synthetase family. In terms of assembly, homodimer. It depends on Mg(2+) as a cofactor.

The protein localises to the cytoplasm. It carries out the reaction tRNA(Lys) + L-lysine + ATP = L-lysyl-tRNA(Lys) + AMP + diphosphate. This Cupriavidus necator (strain ATCC 17699 / DSM 428 / KCTC 22496 / NCIMB 10442 / H16 / Stanier 337) (Ralstonia eutropha) protein is Lysine--tRNA ligase.